Reading from the N-terminus, the 350-residue chain is LIM domain-containing protein unc-95 (350 aa).

Positions 1–37 are enriched in polar residues; sequence MTISPQPSHQQFESYQWTTESRSSQQRHGTGTPSQDG. The segment at 1–65 is disordered; it reads MTISPQPSHQ…ESRNSNKDKV (65 aa). Residues 45 to 65 show a composition bias toward basic and acidic residues; the sequence is PVERHVARWRSESRNSNKDKV. Residues 83–110 adopt a coiled-coil conformation; sequence LTALKNDVEQTTEIIRRKQEQMRMERRQ. Disordered stretches follow at residues 177-198, 206-225, and 235-262; these read RRGQ…EIEY, PEEQ…METD, and MSEE…SGSP. An LIM zinc-binding domain is found at 268–334; the sequence is AVCAYCSEEI…HDCFYKLYNG (67 aa).

Ubiquitinated. Ubiquitination by rnf-5 leads to dissociation from muscle dense bodies during molting and is required for ecdysis. As to expression, expressed in the body wall muscles, vulval muscles and the anal muscles. Expressed in the muscle arms of the head muscle cells that form neuromuscular junctions and in the anal depressor muscle.

The protein localises to the cytoplasm. The protein resides in the nucleus. Its subcellular location is the cell membrane. It localises to the myofibril. It is found in the sarcomere. The protein localises to the m line. The protein resides in the cell junction. Its subcellular location is the focal adhesion. Required for the assembly and integrity of muscle dense bodies, which establish the adhesion sites of the muscle cells to the extracellular matrix. Decreased localization of unc-95 to dense bodies and their subsequent dissociation plays an important role in ecdysis during molting. Involved in the organization of the muscle sarcomeric structure and thereby required for locomotion. The sequence is that of LIM domain-containing protein unc-95 from Caenorhabditis elegans.